Reading from the N-terminus, the 184-residue chain is Large ribosomal subunit protein uL22 (184 aa).

The segment at 160 to 184 (PEEEVAQKKKISQKKLKKQKLMARE) is disordered. The span at 167-184 (KKKISQKKLKKQKLMARE) shows a compositional bias: basic residues.

The protein belongs to the universal ribosomal protein uL22 family. As to quaternary structure, component of the large ribosomal subunit.

Its subcellular location is the cytoplasm. Component of the large ribosomal subunit. The ribosome is a large ribonucleoprotein complex responsible for the synthesis of proteins in the cell. The polypeptide is Large ribosomal subunit protein uL22 (RPL17) (Bos taurus (Bovine)).